A 122-amino-acid polypeptide reads, in one-letter code: Large ribosomal subunit protein uL14 (122 aa).

This sequence belongs to the universal ribosomal protein uL14 family. In terms of assembly, part of the 50S ribosomal subunit. Forms a cluster with proteins L3 and L19. In the 70S ribosome, L14 and L19 interact and together make contacts with the 16S rRNA in bridges B5 and B8.

Its function is as follows. Binds to 23S rRNA. Forms part of two intersubunit bridges in the 70S ribosome. This is Large ribosomal subunit protein uL14 from Psychrobacter sp. (strain PRwf-1).